Consider the following 184-residue polypeptide: GMP synthase [glutamine-hydrolyzing] subunit A (184 aa).

The 182-residue stretch at 3–184 (RIVVVDNHGQ…ENFRDICAGD (182 aa)) folds into the Glutamine amidotransferase type-1 domain. The active-site Nucleophile is the Cys-73. Catalysis depends on residues His-161 and Glu-163.

As to quaternary structure, heterodimer composed of a glutamine amidotransferase subunit (A) and a GMP-binding subunit (B).

It carries out the reaction XMP + L-glutamine + ATP + H2O = GMP + L-glutamate + AMP + diphosphate + 2 H(+). Its pathway is purine metabolism; GMP biosynthesis; GMP from XMP (L-Gln route): step 1/1. Functionally, catalyzes the synthesis of GMP from XMP. This is GMP synthase [glutamine-hydrolyzing] subunit A from Natronomonas pharaonis (strain ATCC 35678 / DSM 2160 / CIP 103997 / JCM 8858 / NBRC 14720 / NCIMB 2260 / Gabara) (Halobacterium pharaonis).